The sequence spans 165 residues: PTS system glucose-specific EIIA component (165 aa).

Residues 33–137 form the PTS EIIA type-1 domain; sequence DPVFAGRMMG…STITPIVITN (105 aa). Zn(2+) is bound by residues His-70 and His-85. The active-site Tele-phosphohistidine intermediate; for EIIA activity is the His-85. A Phosphohistidine; by HPr modification is found at His-85.

Heterodimer with glycerol kinase (glpk). Zn(2+) is required as a cofactor.

Its subcellular location is the cytoplasm. In terms of biological role, the phosphoenolpyruvate-dependent sugar phosphotransferase system (sugar PTS), a major carbohydrate active transport system, catalyzes the phosphorylation of incoming sugar substrates concomitantly with their translocation across the cell membrane. The enzyme II complex composed of PtsG and Crr is involved in glucose transport. This is PTS system glucose-specific EIIA component (crr) from Bacillus cereus (strain ATCC 14579 / DSM 31 / CCUG 7414 / JCM 2152 / NBRC 15305 / NCIMB 9373 / NCTC 2599 / NRRL B-3711).